The sequence spans 781 residues: Probable serine/threonine-protein kinase C70.05c (781 aa).

Disordered regions lie at residues 1 to 315 and 368 to 417; these read MPSD…PLVS and YSGK…TNIS. Residues 21-31 show a composition bias toward low complexity; that stretch reads ESPSSRSIGSG. Polar residues predominate over residues 43–63; it reads FKNSFLSRKNSSQIKSPSDYK. Residues 64–73 show a composition bias toward basic and acidic residues; that stretch reads SSAHEQRVNH. Over residues 74 to 92 the composition is skewed to polar residues; that stretch reads TTDSMAHVPGNNSPLQTPQ. Ser94 is subject to Phosphoserine. Positions 112–121 are enriched in basic residues; it reads SRHHKPHHSG. Composition is skewed to polar residues over residues 136 to 146, 161 to 195, and 206 to 228; these read SNANSPTSESP, KNTS…PNSR, and NSAS…SLSR. Ser253 carries the phosphoserine modification. The segment covering 272–304 has biased composition (low complexity); that stretch reads PLTASPTPSSPTGTPNSMSKSPSLSSLASTGAS. Residues 379–406 show a composition bias toward polar residues; sequence NVGSSANTAPNSPTSANSSEGNQGNGPT. A Protein kinase domain is found at 432–742; sequence AKRVVPRLSA…AQEALNLPFV (311 aa). ATP is bound by residues 452–460 and Lys480; that span reads MGSGATAVI. Asp584 functions as the Proton acceptor in the catalytic mechanism.

The protein belongs to the protein kinase superfamily. Ser/Thr protein kinase family.

It is found in the cytoplasm. The catalysed reaction is L-seryl-[protein] + ATP = O-phospho-L-seryl-[protein] + ADP + H(+). It carries out the reaction L-threonyl-[protein] + ATP = O-phospho-L-threonyl-[protein] + ADP + H(+). In Schizosaccharomyces pombe (strain 972 / ATCC 24843) (Fission yeast), this protein is Probable serine/threonine-protein kinase C70.05c.